A 72-amino-acid polypeptide reads, in one-letter code: Mitotic-spindle organizing protein 1 (72 aa).

The protein belongs to the MOZART1 family. As to quaternary structure, part of the gamma-tubulin complex.

The protein localises to the cytoplasm. Its subcellular location is the cytoskeleton. It localises to the microtubule organizing center. It is found in the centrosome. The protein resides in the spindle. In terms of biological role, required for gamma-tubulin complex recruitment to the centrosome. The protein is Mitotic-spindle organizing protein 1 (mzt1) of Xenopus tropicalis (Western clawed frog).